Consider the following 394-residue polypeptide: QWRF motif-containing protein 7 (394 aa).

A disordered region spans residues 1 to 171; that stretch reads MATTGRRLRP…ESPVSKAKIR (171 aa). Residues 14–67 are compositionally biased toward low complexity; it reads NNNRSRTISSSISLPVSLNASLSSSTSSSSSSSPSNSSKRVMITRSQSTTRSSR. Positions 85 to 96 are enriched in polar residues; it reads NSASRSQEINNG. A compositionally biased stretch (basic and acidic residues) spans 97-110; the sequence is RSRESFARYLEQRT. Composition is skewed to polar residues over residues 111-120 and 142-157; these read RGSPRSNASS and TMKT…TSMC. Residues 211–214 carry the QWRF motif motif; sequence QWRF.

This sequence belongs to the QWRF family.

The sequence is that of QWRF motif-containing protein 7 (QWRF7) from Arabidopsis thaliana (Mouse-ear cress).